Consider the following 157-residue polypeptide: Protein Smg homolog (157 aa).

The protein belongs to the Smg family.

The protein is Protein Smg homolog of Aliivibrio fischeri (strain ATCC 700601 / ES114) (Vibrio fischeri).